A 127-amino-acid chain; its full sequence is Glycine cleavage system H protein (127 aa).

The Lipoyl-binding domain occupies 23-104; it reads TALVGLTDYA…PYEAWFAKIT (82 aa). An N6-lipoyllysine modification is found at K64.

The protein belongs to the GcvH family. The glycine cleavage system is composed of four proteins: P, T, L and H. Requires (R)-lipoate as cofactor.

Its function is as follows. The glycine cleavage system catalyzes the degradation of glycine. The H protein shuttles the methylamine group of glycine from the P protein to the T protein. The polypeptide is Glycine cleavage system H protein (Lachnoclostridium phytofermentans (strain ATCC 700394 / DSM 18823 / ISDg) (Clostridium phytofermentans)).